The following is a 367-amino-acid chain: Ataxin-7-like protein 3 (367 aa).

Residues 84-105 (CVCPNCSRSIAASRFAPHLEKC) form an SGF11-type zinc finger. Residues 116–125 (ANRRIASSNN) are compositionally biased toward low complexity. Residues 116–184 (ANRRIASSNN…GELSGSVNPD (69 aa)) are disordered. Over residues 132–141 (DQEDNDDIND) the composition is skewed to acidic residues. Positions 199–266 (LGPEELRSIL…TMLENEAYEP (68 aa)) constitute an SCA7 domain. The segment covering 280 to 299 (ASSDISPSDSASSKASTNNS) has biased composition (low complexity). The interval 280–367 (ASSDISPSDS…PAPSIYDDLN (88 aa)) is disordered. Residues 318 to 329 (GERDKAQERDRI) are compositionally biased toward basic and acidic residues. Residues 330–346 (AGSGSSGSSSQNALGLS) are compositionally biased toward low complexity.

It belongs to the SGF11 family. As to quaternary structure, component of some SAGA transcription coactivator-HAT complexes. Within the SAGA complex, participates in a subcomplex of SAGA called the DUB module (deubiquitination module).

The protein localises to the nucleus. Its function is as follows. Component of the transcription regulatory histone acetylation (HAT) complex SAGA, a multiprotein complex that activates transcription by remodeling chromatin and mediating histone acetylation and deubiquitination. Within the SAGA complex, participates in a subcomplex that specifically deubiquitinates histone H2B. The SAGA complex is recruited to specific gene promoters by activators, where it is required for transcription. In Danio rerio (Zebrafish), this protein is Ataxin-7-like protein 3 (atxn7l3).